The following is a 433-amino-acid chain: Glutamyl-tRNA reductase (433 aa).

Substrate is bound by residues 49–52 (TCNR), serine 109, 114–116 (EGQ), and glutamine 120. Catalysis depends on cysteine 50, which acts as the Nucleophile. 189-194 (GAGKMS) provides a ligand contact to NADP(+).

This sequence belongs to the glutamyl-tRNA reductase family. Homodimer.

It carries out the reaction (S)-4-amino-5-oxopentanoate + tRNA(Glu) + NADP(+) = L-glutamyl-tRNA(Glu) + NADPH + H(+). The protein operates within porphyrin-containing compound metabolism; protoporphyrin-IX biosynthesis; 5-aminolevulinate from L-glutamyl-tRNA(Glu): step 1/2. It functions in the pathway porphyrin-containing compound metabolism; chlorophyll biosynthesis. Functionally, catalyzes the NADPH-dependent reduction of glutamyl-tRNA(Glu) to glutamate 1-semialdehyde (GSA). This chain is Glutamyl-tRNA reductase, found in Acaryochloris marina (strain MBIC 11017).